Here is a 580-residue protein sequence, read N- to C-terminus: DNA mismatch repair protein MutL (580 aa).

The protein belongs to the DNA mismatch repair MutL/HexB family.

This protein is involved in the repair of mismatches in DNA. It is required for dam-dependent methyl-directed DNA mismatch repair. May act as a 'molecular matchmaker', a protein that promotes the formation of a stable complex between two or more DNA-binding proteins in an ATP-dependent manner without itself being part of a final effector complex. This chain is DNA mismatch repair protein MutL, found in Chlamydia caviae (strain ATCC VR-813 / DSM 19441 / 03DC25 / GPIC) (Chlamydophila caviae).